The primary structure comprises 378 residues: Spermidine/putrescine import ATP-binding protein PotA (378 aa).

The ABC transporter domain maps to 18–248 (VQLAGIRKCF…PKNLFVAGFI (231 aa)). ATP is bound at residue 50–57 (GPSGCGKT).

It belongs to the ABC transporter superfamily. Spermidine/putrescine importer (TC 3.A.1.11.1) family. As to quaternary structure, the complex is composed of two ATP-binding proteins (PotA), two transmembrane proteins (PotB and PotC) and a solute-binding protein (PotD).

The protein resides in the cell inner membrane. The catalysed reaction is ATP + H2O + polyamine-[polyamine-binding protein]Side 1 = ADP + phosphate + polyamineSide 2 + [polyamine-binding protein]Side 1.. Its function is as follows. Part of the ABC transporter complex PotABCD involved in spermidine/putrescine import. Responsible for energy coupling to the transport system. The chain is Spermidine/putrescine import ATP-binding protein PotA from Shigella flexneri.